The sequence spans 119 residues: Large ribosomal subunit protein bL20 (119 aa).

This sequence belongs to the bacterial ribosomal protein bL20 family.

In terms of biological role, binds directly to 23S ribosomal RNA and is necessary for the in vitro assembly process of the 50S ribosomal subunit. It is not involved in the protein synthesizing functions of that subunit. This is Large ribosomal subunit protein bL20 from Verminephrobacter eiseniae (strain EF01-2).